The primary structure comprises 283 residues: Phosphatidylserine decarboxylase proenzyme (283 aa).

Active-site charge relay system; for autoendoproteolytic cleavage activity residues include Asp90, His143, and Ser248. Ser248 acts as the Schiff-base intermediate with substrate; via pyruvic acid; for decarboxylase activity in catalysis. A Pyruvic acid (Ser); by autocatalysis modification is found at Ser248.

The protein belongs to the phosphatidylserine decarboxylase family. PSD-B subfamily. Prokaryotic type I sub-subfamily. In terms of assembly, heterodimer of a large membrane-associated beta subunit and a small pyruvoyl-containing alpha subunit. Pyruvate is required as a cofactor. Is synthesized initially as an inactive proenzyme. Formation of the active enzyme involves a self-maturation process in which the active site pyruvoyl group is generated from an internal serine residue via an autocatalytic post-translational modification. Two non-identical subunits are generated from the proenzyme in this reaction, and the pyruvate is formed at the N-terminus of the alpha chain, which is derived from the carboxyl end of the proenzyme. The autoendoproteolytic cleavage occurs by a canonical serine protease mechanism, in which the side chain hydroxyl group of the serine supplies its oxygen atom to form the C-terminus of the beta chain, while the remainder of the serine residue undergoes an oxidative deamination to produce ammonia and the pyruvoyl prosthetic group on the alpha chain. During this reaction, the Ser that is part of the protease active site of the proenzyme becomes the pyruvoyl prosthetic group, which constitutes an essential element of the active site of the mature decarboxylase.

It is found in the cell membrane. The enzyme catalyses a 1,2-diacyl-sn-glycero-3-phospho-L-serine + H(+) = a 1,2-diacyl-sn-glycero-3-phosphoethanolamine + CO2. Its pathway is phospholipid metabolism; phosphatidylethanolamine biosynthesis; phosphatidylethanolamine from CDP-diacylglycerol: step 2/2. In terms of biological role, catalyzes the formation of phosphatidylethanolamine (PtdEtn) from phosphatidylserine (PtdSer). This Francisella tularensis subsp. holarctica (strain OSU18) protein is Phosphatidylserine decarboxylase proenzyme.